The sequence spans 1061 residues: Eukaryotic translation initiation factor 3 subunit A (1061 aa).

The segment covering 114-126 (QSSIEATTGSSSV) has biased composition (polar residues). The disordered stretch occupies residues 114 to 133 (QSSIEATTGSSSVEDLEASE). One can recognise a PCI domain in the interval 339 to 523 (LQKAATFVVL…GVLSFDVDVF (185 aa)). Coiled coils occupy residues 609 to 724 (EVIQ…KRLD) and 789 to 906 (RADL…AAAA). Residues 828 to 901 (REKREREEKE…EAMARRRAEK (74 aa)) show a composition bias toward basic and acidic residues. The segment at 828–1061 (REKREREEKE…KYVPKFRREG (234 aa)) is disordered. Composition is skewed to pro residues over residues 950–962 (SGPP…PPPI) and 1000–1011 (APPPERSGPPPR).

It belongs to the eIF-3 subunit A family. In terms of assembly, component of the eukaryotic translation initiation factor 3 (eIF-3) complex.

Its subcellular location is the cytoplasm. In terms of biological role, RNA-binding component of the eukaryotic translation initiation factor 3 (eIF-3) complex, which is involved in protein synthesis of a specialized repertoire of mRNAs and, together with other initiation factors, stimulates binding of mRNA and methionyl-tRNAi to the 40S ribosome. The eIF-3 complex specifically targets and initiates translation of a subset of mRNAs involved in cell proliferation. This chain is Eukaryotic translation initiation factor 3 subunit A, found in Chaetomium globosum (strain ATCC 6205 / CBS 148.51 / DSM 1962 / NBRC 6347 / NRRL 1970) (Soil fungus).